A 511-amino-acid polypeptide reads, in one-letter code: Lysine--tRNA ligase (511 aa).

The Mg(2+) site is built by glutamate 421 and glutamate 428.

It belongs to the class-II aminoacyl-tRNA synthetase family. In terms of assembly, homodimer. The cofactor is Mg(2+).

The protein localises to the cytoplasm. The enzyme catalyses tRNA(Lys) + L-lysine + ATP = L-lysyl-tRNA(Lys) + AMP + diphosphate. The sequence is that of Lysine--tRNA ligase from Aeromonas hydrophila subsp. hydrophila (strain ATCC 7966 / DSM 30187 / BCRC 13018 / CCUG 14551 / JCM 1027 / KCTC 2358 / NCIMB 9240 / NCTC 8049).